The chain runs to 45 residues: Large ribosomal subunit protein bL34 (45 aa).

Positions 22 to 45 (RMRTKSGQNVIKARRRKGRARLTV) are disordered. The span at 33–45 (KARRRKGRARLTV) shows a compositional bias: basic residues.

It belongs to the bacterial ribosomal protein bL34 family.

In Thermosynechococcus vestitus (strain NIES-2133 / IAM M-273 / BP-1), this protein is Large ribosomal subunit protein bL34.